Reading from the N-terminus, the 446-residue chain is Transcription factor SOX-8 (446 aa).

Disordered stretches follow at residues 1–58 (MLDM…DPAE), 155–259 (AERL…RQNI), and 318–378 (HKSA…PFAG). The segment covering 40–53 (EGLGRAGVAVGGAR) has biased composition (gly residues). The interval 58–100 (EAADERFPACIRDAVSQVLKGYDWSLVPMPVRGGGGGALKAKP) is dimerization (DIM). Positions 102-170 (VKRPMNAFMV…QHKKDHPDYK (69 aa)) form a DNA-binding region, HMG box. Basic and acidic residues-rich tracts occupy residues 155–171 (AERL…DYKY), 210–219 (DGHHHGDHTG), and 242–253 (PELKLEGRRPVD). The tract at residues 224–298 (PPTPPTTPKT…LPLGGPAPPE (75 aa)) is transactivation domain (TAM). Positions 335-446 (RPHIKTEQPS…QPVYTTLTRP (112 aa)) are transactivation domain (TAC). The span at 362–378 (SGQSSATPAAPAGPFAG) shows a compositional bias: low complexity. Positions 400 to 408 (PGLYQYPCF) match the 9aaTAD motif. The interval 425-446 (LPPAHSPTSHWDQPVYTTLTRP) is disordered. Positions 430–446 (SPTSHWDQPVYTTLTRP) are enriched in polar residues.

It localises to the nucleus. Transcription factor that may play a role in central nervous system, limb and facial development. May be involved in male sex determination. Binds the consensus motif 5'-[AT][AT]CAA[AT]G-3'. This is Transcription factor SOX-8 from Homo sapiens (Human).